The chain runs to 73 residues: Defensin-like protein 6 (73 aa).

The first 26 residues, 1 to 26 (MENKFFAAFFLLLVLFSSQEIIGGEG), serve as a signal peptide directing secretion. 4 disulfide bridges follow: C29/C73, C40/C60, C46/C67, and C50/C69.

Belongs to the DEFL family.

The protein resides in the secreted. Its function is as follows. Confers broad-spectrum resistance to pathogens. This Arabidopsis thaliana (Mouse-ear cress) protein is Defensin-like protein 6 (PDF2.5).